We begin with the raw amino-acid sequence, 556 residues long: Formate--tetrahydrofolate ligase (556 aa).

65–72 is a binding site for ATP; that stretch reads TPAGEGKS.

The protein belongs to the formate--tetrahydrofolate ligase family.

The enzyme catalyses (6S)-5,6,7,8-tetrahydrofolate + formate + ATP = (6R)-10-formyltetrahydrofolate + ADP + phosphate. It functions in the pathway one-carbon metabolism; tetrahydrofolate interconversion. The chain is Formate--tetrahydrofolate ligase from Streptococcus pneumoniae serotype 4 (strain ATCC BAA-334 / TIGR4).